Consider the following 399-residue polypeptide: Acetate kinase (399 aa).

Asn10 serves as a coordination point for Mg(2+). Residue Lys17 participates in ATP binding. Residue Arg91 coordinates substrate. Catalysis depends on Asp148, which acts as the Proton donor/acceptor. Residues His208–Gly212, Asp283–Arg285, and Gly331–Asn335 contribute to the ATP site. Glu385 serves as a coordination point for Mg(2+).

This sequence belongs to the acetokinase family. In terms of assembly, homodimer. Requires Mg(2+) as cofactor. It depends on Mn(2+) as a cofactor.

It localises to the cytoplasm. It carries out the reaction acetate + ATP = acetyl phosphate + ADP. It functions in the pathway metabolic intermediate biosynthesis; acetyl-CoA biosynthesis; acetyl-CoA from acetate: step 1/2. Functionally, catalyzes the formation of acetyl phosphate from acetate and ATP. Can also catalyze the reverse reaction. In Shewanella sp. (strain ANA-3), this protein is Acetate kinase.